The chain runs to 167 residues: Phosphopantetheine adenylyltransferase (167 aa).

Ser10 serves as a coordination point for substrate. ATP contacts are provided by residues 10–11 (SF) and His18. Substrate is bound by residues Lys42, Ala79, and Arg93. ATP contacts are provided by residues 94–96 (GLR), Glu104, and 129–135 (VGHITAT).

This sequence belongs to the bacterial CoaD family. Homohexamer. It depends on Mg(2+) as a cofactor.

It is found in the cytoplasm. The catalysed reaction is (R)-4'-phosphopantetheine + ATP + H(+) = 3'-dephospho-CoA + diphosphate. It functions in the pathway cofactor biosynthesis; coenzyme A biosynthesis; CoA from (R)-pantothenate: step 4/5. Its function is as follows. Reversibly transfers an adenylyl group from ATP to 4'-phosphopantetheine, yielding dephospho-CoA (dPCoA) and pyrophosphate. This chain is Phosphopantetheine adenylyltransferase, found in Methylocella silvestris (strain DSM 15510 / CIP 108128 / LMG 27833 / NCIMB 13906 / BL2).